A 128-amino-acid chain; its full sequence is Con-Ins F2b (128 aa).

Residues 1–24 (MTTSSYFLLVALGLLLYVCRSSFG) form the signal peptide. Cystine bridges form between Cys29-Cys104, Cys41-Cys107, Cys53-Cys120, and Cys106-Cys111. Positions 59–89 (LQGGTGKKRGRASLLRKRRAFLSMLKARAKR) are cleaved as a propeptide — c peptide. Glu115 carries the 4-carboxyglutamate; partial modification. Ser127 is modified (serine amide).

The protein belongs to the insulin family. In terms of assembly, heterodimer of A and B chains; disulfide-linked. Expressed by the venom gland.

It is found in the secreted. Its function is as follows. This venom insulin facilitates prey capture by rapidly inducing hypoglycemic shock. Intraperitoneal injection of this peptide into zebrafish lowers blood glucose with the same potency than human insulin. In vivo, when applied to water, this peptide reduces overall locomotor activity of zebrafish larvae, observed as a significant decrease in the percentage of time spent swimming and movement frequency. This is Con-Ins F2b from Conus floridulus (Cone snail).